A 145-amino-acid polypeptide reads, in one-letter code: AN1-type zinc finger protein 2A (145 aa).

2 AN1-type zinc fingers span residues P4–V52 and K94–I142. Zn(2+) is bound by residues C10, C15, C25, C28, C33, H36, H42, C44, C100, C105, C115, C118, C123, H126, H132, and C134.

It is found in the cytoplasm. It localises to the nucleus. The chain is AN1-type zinc finger protein 2A (ZFAND2A) from Homo sapiens (Human).